A 587-amino-acid polypeptide reads, in one-letter code: Putative ankyrin repeat protein L66 (587 aa).

16 ANK repeats span residues 77-106, 108-136, 137-166, 168-196, 199-228, 230-256, 259-288, 302-331, 333-360, 361-390, 392-418, 420-448, 449-478, 480-507, 509-537, and 539-567; these read DKNLSMLLATKYGKLNIIKYLVRNGTDIRI, NNYPVRKASKYGYLDIVKYLIREDCDVSD, YDNYALRKATKNGYFEIVKLLVDQGADVHC, DNAPIKLACKYGYSKMVKFFHKKFLDVNY, NEDLLLKLASSGGHYKIVKYLVTKSNNIHF, DSLISVIKKGHLDILKYFISKGVILGN, NIRNATLMACKKGHYNVVEYLIDNIISIEN, FKKNLITNTCISGNLDMLKYLISKGINVAF, DNLPIKISACHDHLHLVKYLVSISNVKI, NYENILISASENGCIKVVKYLVDKGVNVKD, TAIYSAGINGYLQIVKFLESNGADLIK, HNEIFLECSSNGYLNVIKYIVSKYNINKS, IYDKALIIASKNNQLKTVKYLVHMGADIKS, KFHDMEKIIDNDLELLKYLVSKGLKINN, YKNLISKIIMNNDLDKLKYLISLGVNMKC, and RIDTFNSCIQNRNKEMLSYLISRKIKLIC.

This is Putative ankyrin repeat protein L66 from Acanthamoeba polyphaga mimivirus (APMV).